We begin with the raw amino-acid sequence, 490 residues long: Cytochrome P450 71B29 (490 aa).

A helical membrane pass occupies residues 1–21 (MAIILCFLILLPLILIFLKKL). Heme is bound at residue Cys440.

It belongs to the cytochrome P450 family. Requires heme as cofactor.

Its subcellular location is the membrane. In Arabidopsis thaliana (Mouse-ear cress), this protein is Cytochrome P450 71B29 (CYP71B29).